The chain runs to 200 residues: MFNISAVAVSYLIGSLSFAVIVSKYYGMDDPRTYGSGNPGATNVLRSGKKKAAALTLLGDAAKGLVAVLLARVLQEPLGLSDSAIAAVALAALVGHMWPVFFGFKGGKGVATALGVLLALSPATALVCALIWLVMAFGFKVSSLAALTATIAAPLAALFFMPHTSWIWATLLIALLVLFRHKSNIVKLLEGRESKIGGSR.

5 helical membrane-spanning segments follow: residues 2 to 22 (FNIS…AVIV), 51 to 71 (KAAA…VLLA), 84 to 104 (AIAA…FFGF), 114 to 134 (LGVL…IWLV), and 159 to 179 (FFMP…LVLF).

Belongs to the PlsY family. As to quaternary structure, probably interacts with PlsX.

Its subcellular location is the cell inner membrane. It catalyses the reaction an acyl phosphate + sn-glycerol 3-phosphate = a 1-acyl-sn-glycero-3-phosphate + phosphate. The protein operates within lipid metabolism; phospholipid metabolism. Its function is as follows. Catalyzes the transfer of an acyl group from acyl-phosphate (acyl-PO(4)) to glycerol-3-phosphate (G3P) to form lysophosphatidic acid (LPA). This enzyme utilizes acyl-phosphate as fatty acyl donor, but not acyl-CoA or acyl-ACP. This chain is Glycerol-3-phosphate acyltransferase, found in Neisseria meningitidis serogroup C (strain 053442).